The following is a 70-amino-acid chain: MSREGFQIPTNLDAAAAGTSQARTATLKYICAECSSKLSLSRTDAVRCKDCGHRILLKARTKRLVQFEAR.

Cysteine 31, cysteine 34, cysteine 48, and cysteine 51 together coordinate Zn(2+). The segment at 31-51 (CAECSSKLSLSRTDAVRCKDC) adopts a C4-type zinc-finger fold.

The protein belongs to the archaeal Rpo12/eukaryotic RPC10 RNA polymerase subunit family. Component of the RNA polymerase I (Pol I), RNA polymerase II (Pol II) and RNA polymerase III (Pol III) complexes. Component of the RNA polymerase I (Pol I) complex consisting of 14 subunits: RPA135, RPA190, RPC40, RPA14, RPB5, RPO26, RPA43, RPB8, RPA12, RPB10, RPC19, RPC10, RPA49 and RPA34. The complex is composed of a horseshoe-shaped core containing ten subunits (RPA135, RPA190, RPB5, RPO26, RPB8, RPB10, RPC10, RPA12, RPC19 and RPC40) where RPA135 and RPA190 form the DNA-binding cleft. Outside of the core, RPA14 and RPA43 form the stalk that mediates interactions with transcription initiation factors and newly synthesized RNA. Component of the RNA polymerase II (Pol II) complex consisting of 12 subunits: RPO21, RPB2, RPB3, RPB4, RPB5, RPO26, RPB7, RPB8, RPB9, RPB10 and RPC10. Component of the RNA polymerase III (Pol III) complex consisting of 17 subunits. Interacts, via its C-terminus, with TFIIIC subunit TFC4. The N-terminus is blocked.

It is found in the nucleus. It localises to the nucleolus. Its subcellular location is the peroxisome. In terms of biological role, DNA-dependent RNA polymerases catalyze the transcription of DNA into RNA using the four ribonucleoside triphosphates as substrates. Common component of RNA polymerases I, II and III which synthesize ribosomal RNA precursors, mRNA precursors and many functional non-coding RNAs, and a small RNAs, such as 5S rRNA and tRNAs, respectively. RNA polymerases are composed of mobile elements that move relative to each other. In Pol II, the core element with the central large cleft comprises RPB3, RBP10, RPB11, RPB12 and regions of RPB1 and RPB2 forming the active center. The sequence is that of DNA-directed RNA polymerases I, II, and III subunit RPABC4 (RPC10) from Saccharomyces cerevisiae (strain ATCC 204508 / S288c) (Baker's yeast).